The sequence spans 332 residues: Methylthioribose-1-phosphate isomerase (332 aa).

Substrate-binding positions include 44 to 46, R87, and Q192; that span reads RGA. D233 acts as the Proton donor in catalysis. A substrate-binding site is contributed by 243–244; that stretch reads NK.

It belongs to the eIF-2B alpha/beta/delta subunits family. MtnA subfamily.

The catalysed reaction is 5-(methylsulfanyl)-alpha-D-ribose 1-phosphate = 5-(methylsulfanyl)-D-ribulose 1-phosphate. Its pathway is amino-acid biosynthesis; L-methionine biosynthesis via salvage pathway; L-methionine from S-methyl-5-thio-alpha-D-ribose 1-phosphate: step 1/6. Its function is as follows. Catalyzes the interconversion of methylthioribose-1-phosphate (MTR-1-P) into methylthioribulose-1-phosphate (MTRu-1-P). The protein is Methylthioribose-1-phosphate isomerase of Dehalococcoides mccartyi (strain ATCC BAA-2100 / JCM 16839 / KCTC 5957 / BAV1).